A 270-amino-acid polypeptide reads, in one-letter code: Homeobox protein pal-1 (270 aa).

Disordered stretches follow at residues 1 to 24 (MSVD…TTVP), 96 to 130 (VKPP…SGAA), and 175 to 201 (LGNN…TNNV). Composition is skewed to low complexity over residues 14 to 24 (SSSTPSPTTVP) and 101 to 130 (SNGS…SGAA). Residues 206 to 265 (ADKYRMVYSDYQRLELEKEFHTSPFITSDRKSQLSTMLSLTERQIKIWFQNRRAKDRRDK) constitute a DNA-binding region (homeobox).

This sequence belongs to the Caudal homeobox family. In terms of assembly, interacts with tir-1 and let-756. As to expression, blastomeres. Embryo. Oocytes.

The protein localises to the nucleus. It localises to the chromosome. Its subcellular location is the centromere. The protein resides in the kinetochore. Transcriptional activator. Interacts with promoter regions for tbx-8.9, tbx-9, elt-1, hnd-1, scrt-1, and vab-7 genes. Binds the sequence ATTTATGAC. Binds to the enhancer region of the hlh-1 gene promoter during embryonic body wall muscle development. Activates the gene for mab-5 in embryo development. Necessary for vab-7 expression in C blastomeres in the posterior of embryos. Required for posterior V6 neuroectoblast cell fate specification during postembryonic neurogenesis (patterning) which generates the characteristic ray lineage during male tail development. Binds to ced-3 promoter and activated expression which is crucial for tail-spike cell death. Has a role in E cell specification in endoderm development and body wall muscle development. This chain is Homeobox protein pal-1 (pal-1), found in Caenorhabditis elegans.